The following is a 348-amino-acid chain: Phosphoribosylformylglycinamidine cyclo-ligase (348 aa).

Belongs to the AIR synthase family.

Its subcellular location is the cytoplasm. The enzyme catalyses 2-formamido-N(1)-(5-O-phospho-beta-D-ribosyl)acetamidine + ATP = 5-amino-1-(5-phospho-beta-D-ribosyl)imidazole + ADP + phosphate + H(+). Its pathway is purine metabolism; IMP biosynthesis via de novo pathway; 5-amino-1-(5-phospho-D-ribosyl)imidazole from N(2)-formyl-N(1)-(5-phospho-D-ribosyl)glycinamide: step 2/2. The sequence is that of Phosphoribosylformylglycinamidine cyclo-ligase from Citrifermentans bemidjiense (strain ATCC BAA-1014 / DSM 16622 / JCM 12645 / Bem) (Geobacter bemidjiensis).